Here is a 61-residue protein sequence, read N- to C-terminus: Temporin-SN2 (61 aa).

An N-terminal signal peptide occupies residues 1-22; sequence MFTLKKTLLLLFFLGTINLSLC. A propeptide spans 23–44 (removed in mature form); sequence EEERNAEEERRDGDDEMDVEVK. Lys-61 carries the post-translational modification Lysine amide.

This sequence belongs to the frog skin active peptide (FSAP) family. Temporin subfamily. Expressed by the skin glands.

Its subcellular location is the secreted. Antimicrobial peptide. Active against some Gram-positive and Gram-negative bacterial strains. Active against fungus C.glabrata 090902 but not against C.albicans ATCC 12231. Shows very weak hemolytic activity against human erythrocytes. The polypeptide is Temporin-SN2 (Sylvirana spinulosa (Fine-spined frog)).